The chain runs to 352 residues: Photosystem II D2 protein (352 aa).

A helical transmembrane segment spans residues 40 to 60; it reads CAFLSIGGWLTGTTFVTSWYT. His-117 contacts chlorophyll a. The helical transmembrane segment at 124 to 140 threads the bilayer; that stretch reads GFCLRQIEIARLVGIRP. Pheophytin a is bound by residues Gln-129 and Asn-142. Residues 152-165 form a helical membrane-spanning segment; that stretch reads VFVSVFLMYPLGQS. His-197 serves as a coordination point for chlorophyll a. A helical transmembrane segment spans residues 207 to 227; it reads GALLCAIHGATVENTLFQDGE. A plastoquinone-binding residues include His-214 and Phe-261. Residue His-214 coordinates Fe cation. His-268 contacts Fe cation. The helical transmembrane segment at 278 to 294 threads the bilayer; that stretch reads GLWMSSIGIVGLAFNLR.

Belongs to the reaction center PufL/M/PsbA/D family. PSII is composed of 1 copy each of membrane proteins PsbA, PsbB, PsbC, PsbD, PsbE, PsbF, PsbH, PsbI, PsbJ, PsbK, PsbL, PsbM, PsbT, PsbX, PsbY, PsbZ, Psb30/Ycf12, peripheral proteins PsbO, CyanoQ (PsbQ), PsbU, PsbV and a large number of cofactors. It forms dimeric complexes. The D1/D2 heterodimer binds P680, chlorophylls that are the primary electron donor of PSII, and subsequent electron acceptors. It shares a non-heme iron and each subunit binds pheophytin, quinone, additional chlorophylls, carotenoids and lipids. There is also a Cl(-1) ion associated with D1 and D2, which is required for oxygen evolution. The PSII complex binds additional chlorophylls, carotenoids and specific lipids. serves as cofactor.

Its subcellular location is the cellular thylakoid membrane. The enzyme catalyses 2 a plastoquinone + 4 hnu + 2 H2O = 2 a plastoquinol + O2. Its function is as follows. Photosystem II (PSII) is a light-driven water:plastoquinone oxidoreductase that uses light energy to abstract electrons from H(2)O, generating O(2) and a proton gradient subsequently used for ATP formation. It consists of a core antenna complex that captures photons, and an electron transfer chain that converts photonic excitation into a charge separation. The D1/D2 (PsbA/PsbD) reaction center heterodimer binds P680, the primary electron donor of PSII as well as several subsequent electron acceptors. D2 is needed for assembly of a stable PSII complex. This chain is Photosystem II D2 protein, found in Trichodesmium erythraeum (strain IMS101).